Consider the following 229-residue polypeptide: MAKLTKKMKSIKAAVDSTKAYEINEAIAVLKQFATAKFVESVDVAVNLGIDPRKSDQNVRGATVLPHGTGRSVRVAVFTQGANAEAAKEAGADLVGMEDLAELVKKGEMNFDVVIASPDAMRVVGQLGQILGPRGLMPNPKVGTVTPNVADAVKNAKSGQVRYRNDKNGIIHTTIGKVNFSEEQLKENLQALLAALAKAKPTTSKGVFIKKVSLSTTMGAGVAIDQASL.

The protein belongs to the universal ribosomal protein uL1 family. Part of the 50S ribosomal subunit.

Binds directly to 23S rRNA. The L1 stalk is quite mobile in the ribosome, and is involved in E site tRNA release. Functionally, protein L1 is also a translational repressor protein, it controls the translation of the L11 operon by binding to its mRNA. The protein is Large ribosomal subunit protein uL1 of Pasteurella multocida (strain Pm70).